The sequence spans 392 residues: 1-deoxy-D-xylulose 5-phosphate reductoisomerase (392 aa).

NADPH is bound by residues Thr-10, Gly-11, Ser-12, Ile-13, Arg-37, Gln-38, and Asn-124. Residue Lys-125 coordinates 1-deoxy-D-xylulose 5-phosphate. Residue Glu-126 coordinates NADPH. Asp-150 is a Mn(2+) binding site. Residues Ser-151, Glu-152, Ser-179, and His-202 each coordinate 1-deoxy-D-xylulose 5-phosphate. Glu-152 provides a ligand contact to Mn(2+). Residue Gly-208 participates in NADPH binding. Residues Ser-215, Asn-220, Lys-221, and Glu-224 each contribute to the 1-deoxy-D-xylulose 5-phosphate site. Position 224 (Glu-224) interacts with Mn(2+).

The protein belongs to the DXR family. Requires Mg(2+) as cofactor. It depends on Mn(2+) as a cofactor.

It catalyses the reaction 2-C-methyl-D-erythritol 4-phosphate + NADP(+) = 1-deoxy-D-xylulose 5-phosphate + NADPH + H(+). It participates in isoprenoid biosynthesis; isopentenyl diphosphate biosynthesis via DXP pathway; isopentenyl diphosphate from 1-deoxy-D-xylulose 5-phosphate: step 1/6. Functionally, catalyzes the NADPH-dependent rearrangement and reduction of 1-deoxy-D-xylulose-5-phosphate (DXP) to 2-C-methyl-D-erythritol 4-phosphate (MEP). The chain is 1-deoxy-D-xylulose 5-phosphate reductoisomerase from Cupriavidus metallidurans (strain ATCC 43123 / DSM 2839 / NBRC 102507 / CH34) (Ralstonia metallidurans).